A 490-amino-acid chain; its full sequence is Cis-aconitate decarboxylase (490 aa).

Belongs to the PrpD family.

Its subcellular location is the mitochondrion. It carries out the reaction cis-aconitate + H(+) = itaconate + CO2. Its function is as follows. Involved in the production of itaconic acid, a soluble unsaturated dicarboxylic acid mainly produced from sugars. The polypeptide is Cis-aconitate decarboxylase (cad1) (Aspergillus terreus).